We begin with the raw amino-acid sequence, 260 residues long: Trans-aconitate 2-methyltransferase (260 aa).

The protein belongs to the methyltransferase superfamily. Tam family.

It is found in the cytoplasm. It catalyses the reaction trans-aconitate + S-adenosyl-L-methionine = (E)-3-(methoxycarbonyl)pent-2-enedioate + S-adenosyl-L-homocysteine. In terms of biological role, catalyzes the S-adenosylmethionine monomethyl esterification of trans-aconitate. In Methylobacterium radiotolerans (strain ATCC 27329 / DSM 1819 / JCM 2831 / NBRC 15690 / NCIMB 10815 / 0-1), this protein is Trans-aconitate 2-methyltransferase.